A 310-amino-acid chain; its full sequence is Probable plastid-lipid-associated protein 2, chloroplastic (310 aa).

The transit peptide at 1 to 59 (MATVQLSTQFSCQTRVSISPNSKSISKPPFLVPVTSIIHRPMISTGGIAVSPRRVFKVR) directs the protein to the chloroplast. Position 61 is a phosphothreonine (threonine 61). The stretch at 65–94 (EIGSALLAAEEAIEDVEETERLKRSLVDSL) forms a coiled coil.

This sequence belongs to the PAP/fibrillin family.

It is found in the plastid. The protein resides in the chloroplast. Its subcellular location is the plastoglobule. Probably involved in light/cold stress-related jasmonate (JA) biosynthesis. This Arabidopsis thaliana (Mouse-ear cress) protein is Probable plastid-lipid-associated protein 2, chloroplastic (PAP2).